The sequence spans 349 residues: MNGTEGSNFYIPMSNRTGLVRSPYDYTQYYLAEPWKFKALAFYMFLLIIFGFPINVLTLVVTAQHKKLRQPLNYILVNLAFAGTIMVIFGFTVSFYCSLVGYMALGPLGCVMEGFFATLGGQVALWSLVVLAIERYIVVCKPMGSFKFSANHAMAGIAFTWFMACSCAVPPLFGWSRYLPEGMQTSCGPDYYTLNPEYNNESYVMYMFSCHFCIPVTTIFFTYGSLVCTVKAAAAQQQESESTQKAEREVTRMVILMVLGFLFAWVPYASFAAWIFFNRGAAFSAQAMAVPAFFSKTSAVFNPIIYVLLNKQFRSCMLNTLFCGKSPLGDDESSSVSTSKTEVSSVSPA.

At Met-1–Lys-36 the chain is on the extracellular side. 2 N-linked (GlcNAc...) asparagine glycosylation sites follow: Asn-2 and Asn-15. Residues Phe-37–Val-61 form a helical membrane-spanning segment. The Cytoplasmic portion of the chain corresponds to Thr-62–Asn-73. Residues Tyr-74 to Leu-99 form a helical membrane-spanning segment. The Extracellular portion of the chain corresponds to Val-100–Glu-113. Cys-110 and Cys-187 are disulfide-bonded. A helical transmembrane segment spans residues Gly-114 to Ile-133. Over Glu-134 to His-152 the chain is Cytoplasmic. A helical transmembrane segment spans residues Ala-153 to Ser-176. At Arg-177 to Ser-202 the chain is on the extracellular side. N-linked (GlcNAc...) asparagine glycosylation is present at Asn-200. A helical transmembrane segment spans residues Tyr-203 to Val-230. The Cytoplasmic segment spans residues Lys-231–Arg-252. Residues Met-253 to Phe-276 form a helical membrane-spanning segment. At Phe-277 to Ser-284 the chain is on the extracellular side. The chain crosses the membrane as a helical span at residues Ala-285–Leu-309. N6-(retinylidene)lysine is present on Lys-296. The Cytoplasmic segment spans residues Asn-310–Ala-349. The disordered stretch occupies residues Leu-328–Ala-349. Residues Ser-334–Ala-349 are compositionally biased toward low complexity.

The protein belongs to the G-protein coupled receptor 1 family. Opsin subfamily. In terms of processing, phosphorylated on some or all of the serine and threonine residues present in the C-terminal region. Retinal double cone accessory photoreceptor cell outer segments.

The protein localises to the membrane. Its function is as follows. Visual pigments are the light-absorbing molecules that mediate vision. They consist of an apoprotein, opsin, covalently linked to cis-retinal. This Danio rerio (Zebrafish) protein is Green-sensitive opsin-1 (opn1mw1).